The primary structure comprises 127 residues: Large ribosomal subunit protein bL12 (127 aa).

Belongs to the bacterial ribosomal protein bL12 family. Homodimer. Part of the ribosomal stalk of the 50S ribosomal subunit. Forms a multimeric L10(L12)X complex, where L10 forms an elongated spine to which 2 to 4 L12 dimers bind in a sequential fashion. Binds GTP-bound translation factors.

Functionally, forms part of the ribosomal stalk which helps the ribosome interact with GTP-bound translation factors. Is thus essential for accurate translation. The polypeptide is Large ribosomal subunit protein bL12 (Rhizobium etli (strain CIAT 652)).